The following is a 129-amino-acid chain: Small ribosomal subunit protein uS11 (129 aa).

Belongs to the universal ribosomal protein uS11 family. As to quaternary structure, part of the 30S ribosomal subunit. Interacts with proteins S7 and S18. Binds to IF-3.

Functionally, located on the platform of the 30S subunit, it bridges several disparate RNA helices of the 16S rRNA. Forms part of the Shine-Dalgarno cleft in the 70S ribosome. The sequence is that of Small ribosomal subunit protein uS11 from Methylorubrum populi (strain ATCC BAA-705 / NCIMB 13946 / BJ001) (Methylobacterium populi).